We begin with the raw amino-acid sequence, 240 residues long: Probable phosphatase Athe_0620 (240 aa).

Positions 8, 10, 16, 41, 74, 102, 132, 192, and 194 each coordinate Zn(2+).

It belongs to the PHP family. Zn(2+) serves as cofactor.

The polypeptide is Probable phosphatase Athe_0620 (Caldicellulosiruptor bescii (strain ATCC BAA-1888 / DSM 6725 / KCTC 15123 / Z-1320) (Anaerocellum thermophilum)).